We begin with the raw amino-acid sequence, 263 residues long: Type III pantothenate kinase (263 aa).

Residue 14–21 (DIGNTSVN) participates in ATP binding. 115-118 (GADR) serves as a coordination point for substrate. The active-site Proton acceptor is D117. D137 lines the K(+) pocket. T140 is an ATP binding site. T192 serves as a coordination point for substrate.

Belongs to the type III pantothenate kinase family. In terms of assembly, homodimer. The cofactor is NH4(+). Requires K(+) as cofactor.

The protein localises to the cytoplasm. The enzyme catalyses (R)-pantothenate + ATP = (R)-4'-phosphopantothenate + ADP + H(+). It functions in the pathway cofactor biosynthesis; coenzyme A biosynthesis; CoA from (R)-pantothenate: step 1/5. In terms of biological role, catalyzes the phosphorylation of pantothenate (Pan), the first step in CoA biosynthesis. This is Type III pantothenate kinase from Dehalococcoides mccartyi (strain CBDB1).